A 621-amino-acid chain; its full sequence is UvrABC system protein C (621 aa).

In terms of domain architecture, GIY-YIG spans 11-90; that stretch reads TTPGVYLYKD…IKKHRPRYNI (80 aa). The UVR domain occupies 200–235; sequence KELVELLQKDMLYASEALEFEKAATLRDQIQAIKHT.

This sequence belongs to the UvrC family. Interacts with UvrB in an incision complex.

It is found in the cytoplasm. Its function is as follows. The UvrABC repair system catalyzes the recognition and processing of DNA lesions. UvrC both incises the 5' and 3' sides of the lesion. The N-terminal half is responsible for the 3' incision and the C-terminal half is responsible for the 5' incision. The polypeptide is UvrABC system protein C (Lawsonia intracellularis (strain PHE/MN1-00)).